Here is a 110-residue protein sequence, read N- to C-terminus: Tyrosine-protein phosphatase 3 (110 aa).

Positions 1 to 110 (QKCATIVMVT…NPPHSGPIVV (110 aa)) constitute a Tyrosine-protein phosphatase domain. Asp80 is a binding site for substrate.

Belongs to the protein-tyrosine phosphatase family.

It carries out the reaction O-phospho-L-tyrosyl-[protein] + H2O = L-tyrosyl-[protein] + phosphate. This is Tyrosine-protein phosphatase 3 (STY-3) from Styela plicata (Wrinkled sea squirt).